Here is a 105-residue protein sequence, read N- to C-terminus: uncharacterized protein (105 aa).

This is an uncharacterized protein from Bacillus phage SPbeta (Bacillus phage SPBc2).